Consider the following 502-residue polypeptide: Lysine--tRNA ligase (502 aa).

Mg(2+) is bound by residues E398 and E405.

Belongs to the class-II aminoacyl-tRNA synthetase family. As to quaternary structure, homodimer. Mg(2+) is required as a cofactor.

The protein localises to the cytoplasm. The enzyme catalyses tRNA(Lys) + L-lysine + ATP = L-lysyl-tRNA(Lys) + AMP + diphosphate. This is Lysine--tRNA ligase from Thermosipho melanesiensis (strain DSM 12029 / CIP 104789 / BI429).